The primary structure comprises 157 residues: Small ribosomal subunit protein uS7 (157 aa).

It belongs to the universal ribosomal protein uS7 family. Part of the 30S ribosomal subunit. Contacts proteins S9 and S11.

In terms of biological role, one of the primary rRNA binding proteins, it binds directly to 16S rRNA where it nucleates assembly of the head domain of the 30S subunit. Is located at the subunit interface close to the decoding center, probably blocks exit of the E-site tRNA. The protein is Small ribosomal subunit protein uS7 of Chlamydia abortus (strain DSM 27085 / S26/3) (Chlamydophila abortus).